We begin with the raw amino-acid sequence, 327 residues long: E3 ubiquitin ligase Rnf121 (327 aa).

Helical transmembrane passes span 50-70 (MHAE…LLLV), 79-96 (SYNM…VYFT), 99-119 (LHWW…AYIT), 148-168 (ATGI…NLLF), and 173-193 (EDAM…GVLG). The segment at 226 to 276 (CAVCGQQIFVDVNEEGIIENTYRLSCNHVFHEFCIRGWCIVGKKQTCPYCK) adopts an RING-type; atypical zinc-finger fold.

This sequence belongs to the RNF121 family.

It localises to the endoplasmic reticulum membrane. The catalysed reaction is S-ubiquitinyl-[E2 ubiquitin-conjugating enzyme]-L-cysteine + [acceptor protein]-L-lysine = [E2 ubiquitin-conjugating enzyme]-L-cysteine + N(6)-ubiquitinyl-[acceptor protein]-L-lysine.. It participates in protein modification; protein ubiquitination. Its function is as follows. E3 ubiquitin ligase which accepts ubiquitin and transfers it to substrates thereby promoting their degradation by the endoplasmic reticulum-associated degradation (ERAD) pathway which is a pathway involved in ubiquitin-dependent degradation of misfolded endoplasmic reticulum proteins. May regulate the unfolded protein response to reduce endoplasmic reticulum stress. This is E3 ubiquitin ligase Rnf121 (rnf121) from Xenopus laevis (African clawed frog).